The following is a 276-amino-acid chain: Undecaprenyl-diphosphatase 1 (276 aa).

6 helical membrane passes run arginine 43–phenylalanine 63, alanine 85–isoleucine 105, leucine 109–alanine 129, alanine 184–glycine 204, alanine 214–valine 234, and isoleucine 254–alanine 274.

It belongs to the UppP family.

It localises to the cell inner membrane. The catalysed reaction is di-trans,octa-cis-undecaprenyl diphosphate + H2O = di-trans,octa-cis-undecaprenyl phosphate + phosphate + H(+). Catalyzes the dephosphorylation of undecaprenyl diphosphate (UPP). Confers resistance to bacitracin. This is Undecaprenyl-diphosphatase 1 from Pseudomonas fluorescens (strain Pf0-1).